The chain runs to 464 residues: Glutamate--tRNA ligase (464 aa).

Positions 9 to 19 (PSPTGYLHIGG) match the 'HIGH' region motif. The 'KMSKS' region signature appears at 242 to 246 (KISKR). Lysine 245 serves as a coordination point for ATP.

The protein belongs to the class-I aminoacyl-tRNA synthetase family. Glutamate--tRNA ligase type 1 subfamily. Monomer.

The protein resides in the cytoplasm. It catalyses the reaction tRNA(Glu) + L-glutamate + ATP = L-glutamyl-tRNA(Glu) + AMP + diphosphate. Its function is as follows. Catalyzes the attachment of glutamate to tRNA(Glu) in a two-step reaction: glutamate is first activated by ATP to form Glu-AMP and then transferred to the acceptor end of tRNA(Glu). The sequence is that of Glutamate--tRNA ligase from Neisseria meningitidis serogroup B (strain ATCC BAA-335 / MC58).